The chain runs to 1043 residues: Sucrose-phosphate synthase 1 (1043 aa).

Positions glutamate 95–threonine 117 are enriched in basic and acidic residues. Positions glutamate 95 to glycine 127 are disordered. Serine 121, serine 125, serine 152, and serine 155 each carry phosphoserine. A disordered region spans residues proline 670–leucine 693.

Belongs to the glycosyltransferase 1 family. Homodimer or homotetramer. Phosphorylated at Ser-152 upon sucrose supply. In terms of tissue distribution, expressed in seeds, stems, rosette leaves, flowers and siliques. Highly expressed in maturing nectaries.

It catalyses the reaction beta-D-fructose 6-phosphate + UDP-alpha-D-glucose = sucrose 6(F)-phosphate + UDP + H(+). Its pathway is glycan biosynthesis; sucrose biosynthesis; sucrose from D-fructose 6-phosphate and UDP-alpha-D-glucose: step 1/2. Its activity is regulated as follows. Activity is regulated by phosphorylation and moderated by concentration of metabolites and light. Its function is as follows. Plays a major role in photosynthetic sucrose synthesis by catalyzing the rate-limiting step of sucrose biosynthesis from UDP-glucose and fructose- 6-phosphate. Involved in the regulation of carbon partitioning in the leaves of plants. May regulate the synthesis of sucrose and therefore play a major role as a limiting factor in the export of photoassimilates out of the leaf. Plays a role for sucrose availability that is essential for plant growth and fiber elongation. Required for nectar secretion. In Arabidopsis thaliana (Mouse-ear cress), this protein is Sucrose-phosphate synthase 1 (SPS1).